The primary structure comprises 361 residues: G-protein coupled receptor 52 (361 aa).

At 1 to 44 (MNESRWTEWRILNMSSSIVNVSEHHSCPLGFGHYSVEDVCIFET) the chain is on the extracellular side. 3 N-linked (GlcNAc...) asparagine glycosylation sites follow: Asn2, Asn13, and Asn20. Residues 45 to 65 (VVIVLLTFLIISGNLTVIFVF) form a helical membrane-spanning segment. Over 66–81 (HCAPLLHHYTTSYFIQ) the chain is Cytoplasmic. Residues 82–102 (TMAYADLLVGVTCLVPTLSLL) traverse the membrane as a helical segment. Topologically, residues 103-115 (HYSTGVHESLTCQ) are extracellular. Cys114 and Cys193 are oxidised to a cystine. The chain crosses the membrane as a helical span at residues 116 to 136 (VFGYIISVLKSVSMACLACIS). Residues 137 to 159 (VDRYLAITKPLSYNQLVTPCRLR) lie on the Cytoplasmic side of the membrane. The helical transmembrane segment at 160-180 (ICIIMIWIYSCLIFLPSFFGW) threads the bilayer. The Extracellular portion of the chain corresponds to 181 to 205 (GKPGYHGDIFEWCATSWLTSAYFTC). A helical transmembrane segment spans residues 206-226 (FIVCLLYAPAALVVCFTYFHI). Over 227–265 (FKICRQHTKEINDRRARFPSHEVEASREAGHSPDRRYAM) the chain is Cytoplasmic. The chain crosses the membrane as a helical span at residues 266 to 286 (VLFRITSVFYMLWLPYIIYFL). The Extracellular segment spans residues 287-296 (LESSRVLDNP). A helical transmembrane segment spans residues 297 to 317 (TLSFLTTWLAISNSFCNCVIY). Residues 318-361 (SLSNSVFRLGLRRLSETMCTSCVCAKDQEAQDPKPRRRANSCSI) are Cytoplasmic-facing.

The protein belongs to the G-protein coupled receptor 1 family. As to expression, expressed in brain, especially in striatum. Expressed in the striatum, nucleus accumbens, and lateral globus pallidus.

It localises to the cell membrane. Its function is as follows. G- protein coupled receptor activated by antipsychotics reserpine leading to an increase in intracellular cAMP and its internalization. May play a role in locomotor activity through modulation of dopamine, NMDA and ADORA2A-induced locomotor activity. These behavioral changes are accompanied by modulation of the dopamine receptor signaling pathway in striatum. Modulates HTT level via cAMP-dependent but PKA independent mechanisms throught activation of RAB39B that translocates HTT to the endoplasmic reticulum, thus avoiding proteasome degradation. This Mus musculus (Mouse) protein is G-protein coupled receptor 52.